The chain runs to 214 residues: 3,4-dihydroxy-2-butanone 4-phosphate synthase (214 aa).

D-ribulose 5-phosphate-binding positions include 37–38 (RE), aspartate 42, 150–154 (RRGHT), and glutamate 174. Residue glutamate 38 coordinates Mg(2+). Histidine 153 serves as a coordination point for Mg(2+).

Belongs to the DHBP synthase family. As to quaternary structure, homodimer. The cofactor is Mg(2+). It depends on Mn(2+) as a cofactor.

The catalysed reaction is D-ribulose 5-phosphate = (2S)-2-hydroxy-3-oxobutyl phosphate + formate + H(+). It functions in the pathway cofactor biosynthesis; riboflavin biosynthesis; 2-hydroxy-3-oxobutyl phosphate from D-ribulose 5-phosphate: step 1/1. Its function is as follows. Catalyzes the conversion of D-ribulose 5-phosphate to formate and 3,4-dihydroxy-2-butanone 4-phosphate. This chain is 3,4-dihydroxy-2-butanone 4-phosphate synthase, found in Nitratidesulfovibrio vulgaris (strain ATCC 29579 / DSM 644 / CCUG 34227 / NCIMB 8303 / VKM B-1760 / Hildenborough) (Desulfovibrio vulgaris).